The following is a 466-amino-acid chain: Glutamate decarboxylase alpha (466 aa).

Substrate-binding residues include T62 and N83. Pyridoxal 5'-phosphate-binding positions include S126 to S127, T212, and H275. K276 carries the N6-(pyridoxal phosphate)lysine modification.

Belongs to the group II decarboxylase family. Homohexamer. The cofactor is pyridoxal 5'-phosphate.

The enzyme catalyses L-glutamate + H(+) = 4-aminobutanoate + CO2. Its function is as follows. Converts glutamate to gamma-aminobutyrate (GABA), consuming one intracellular proton in the reaction. The gad system helps to maintain a near-neutral intracellular pH when cells are exposed to extremely acidic conditions. The ability to survive transit through the acidic conditions of the stomach is essential for successful colonization of the mammalian host by commensal and pathogenic bacteria. This Shigella flexneri protein is Glutamate decarboxylase alpha (gadA).